We begin with the raw amino-acid sequence, 479 residues long: MKVLHVCSELYPLLKTGGLADVMGALPFAQNEIGIDARLVLPAYPAISRGIPNTVVVAEFNNFAGHVVLRYGEYNGIGVYLIDAPHLYAREGNPYHDMWYNDYTDNYKRFALLAWVGAELATGLDFWWRAEIVHAHDWHAGLTAAYLHHKGRPAKSVFTIHNLAYQGRFLPYHLTEIGLPWWMFNVDGLELYGEMSYLKAGLYYSDISTAVSPTYAKEITTPEFAYGLQGLLQTLKAQGRLVGILNGVDEKIWHPYSDPYIEDHYKLKSMQGKRKNKIKLQAYFNLPQNPNALLFVMVTRLTEQKGVDLLIGSAERIVQQGGQLAILGSGSAHLEAGINWLAQEYPENIAVKIGYDEALSHLMIAGGDVILVPSRFEPCGLTQLYGLKYGTLPLVRSTGGLADTVIDSSSENIKARHATGFVFNDADVGGLCYGIDSAFTLWRKPSQWESVIVNAMEQDFSWQTSAKGYQSLYDILLHK.

ADP-alpha-D-glucose is bound at residue K15.

This sequence belongs to the glycosyltransferase 1 family. Bacterial/plant glycogen synthase subfamily.

The enzyme catalyses [(1-&gt;4)-alpha-D-glucosyl](n) + ADP-alpha-D-glucose = [(1-&gt;4)-alpha-D-glucosyl](n+1) + ADP + H(+). The protein operates within glycan biosynthesis; glycogen biosynthesis. Functionally, synthesizes alpha-1,4-glucan chains using ADP-glucose. In Histophilus somni (strain 129Pt) (Haemophilus somnus), this protein is Glycogen synthase.